The following is a 246-amino-acid chain: Transmembrane and ubiquitin-like domain-containing protein 1 (246 aa).

Residues 2 to 30 (ALIEGVGDEVTILFSALACLLVLALAWVS) are required to release iHOPS from membranes. The chain crosses the membrane as a helical span at residues 11–31 (VTILFSALACLLVLALAWVST). Positions 35 to 102 (EGADPLPQPS…PPPPDSPQEP (68 aa)) are disordered. Positions 40–50 (LPQPSGTPTPT) are enriched in pro residues. 2 positions are modified to phosphothreonine: Thr71 and Thr92. A phosphoserine mark is found at Ser98 and Ser127. The 74-residue stretch at 103 to 176 (LVLRLKFLND…LHCHVSTRVG (74 aa)) folds into the Ubiquitin-like domain. Helical transmembrane passes span 195–215 (VGSL…YCQI) and 221–241 (FPLT…LLAF).

In terms of assembly, interacts with EEF1A1, GRIA2, GRIP1, CAMLG, TUBG1. Interacts with NPM1 and CDKN2A; TMUB1 can enhance interaction between NPM1 and CDKN2A and is proposed to bridge the proteins; proposed to be mediated by iHOPS. Interacts with ERLIN2 and AMFR; TMUB1 promotes the interaction of ERLIN2 with AMFR. In terms of processing, processed by regulated intramembrane proteolysis (RIP) in the N-terminus to release iHOPS from membranes.

The protein resides in the membrane. It is found in the postsynaptic cell membrane. It localises to the recycling endosome. The protein localises to the cytoplasm. Its subcellular location is the nucleus. The protein resides in the nucleolus. It is found in the cytoskeleton. It localises to the microtubule organizing center. The protein localises to the centrosome. Its function is as follows. Involved in sterol-regulated ubiquitination and degradation of HMG-CoA reductase HMGCR. Involved in positive regulation of AMPA-selective glutamate receptor GRIA2 recycling to the cell surface. Acts as negative regulator of hepatocyte growth during regeneration. In terms of biological role, may contribute to the regulation of translation during cell-cycle progression. May contribute to the regulation of cell proliferation. May be involved in centrosome assembly. Modulates stabilization and nucleolar localization of tumor suppressor CDKN2A and enhances association between CDKN2A and NPM1. The chain is Transmembrane and ubiquitin-like domain-containing protein 1 (TMUB1) from Bos taurus (Bovine).